A 378-amino-acid chain; its full sequence is Trans-enoyl reductase poxP (378 aa).

62 to 65 (CDWK) serves as a coordination point for NADP(+). 151 to 158 (SVFATLWI) serves as a coordination point for substrate. NADP(+) contacts are provided by residues 187–190 (STST), 210–213 (SPHN), Tyr228, and 275–276 (LE). 295 to 299 (GLAAS) serves as a coordination point for substrate. Position 364–365 (364–365 (TS)) interacts with NADP(+).

The protein belongs to the zinc-containing alcohol dehydrogenase family. In terms of assembly, monomer.

Its pathway is secondary metabolite biosynthesis. Its function is as follows. Trans-enoyl reductase; part of the gene cluster that mediates the biosynthesis of oxaleimides, cytotoxic compounds containing an unusual disubstituted succinimide moiety. The first step of the pathway is provided by the HR-PKS poxF that serves in a new mode of collaborative biosynthesis with the PKS-NRPS poxE, by providing the olefin containing amino acid substrate via the synthesis of an ACP-bound dec-4-enoate. The cytochrome P450 monooxygenase poxM-catalyzed oxidation at the alpha-position creates the enzyme-bound 2-hydroxydec-4-enoyl-ACP thioester, which may be prone to spontaneous hydrolysis to yield 2-hydroxydec-4-enoic acid due to increased electrophilicity of the carbonyl. 2-hydroxydec-4-enoic acid can then be further oxidized by poxM to yield the alpha-ketoacid 2-oxodec-4-enoicacid, which is reductively aminated by the aminotransferase poxL to yield (S,E)-2-aminodec-4-enoic acid. The Hybrid PKS-NRPS synthetase poxE then performs condensation between the octaketide product of its PKS modules and the amino group of (S,E)-2-aminodec-4-enoic acid which is activated and incorporated by the adenylation domain. The resulting aminoacyl product can be cyclized by the Diels-Alderase PoxQ and reductively released by the reductive (R) domain of poxE to yield an aldehyde intermediate. The released aldehyde is then substrate for a Knoevenagel condensation by the hydrolyase poxO followed by an oxidation at the 5-position of the pyrrolidone ring. The presence of the olefin from the amino acid building block allows for migration of the substituted allyl group to occur. This allylic transposition reaction takes place in a conjugate addition, semipinacol-like fashion to yield a succinimide intermediate. Iterative two-electron oxidations of the C7 methyl of the succinimide intermediate to the carboxylic acid can be catalyzed by one of two remaining cytochrome P450 monooxygenasess poxC or poxD to yield oxaleimide A. Subsequent oxidation yields the maleimide scaffold oxaleimide I. Both oxaleimide A and oxaleimide I can undergo oxidative modifications in the decalin ring to yield the series of products oxaleimides B to H. The sequence is that of Trans-enoyl reductase poxP from Penicillium oxalicum.